Here is a 366-residue protein sequence, read N- to C-terminus: Chorismate synthase (366 aa).

Residues R48 and R54 each coordinate NADP(+). Residues 125–127 (RSS), 238–239 (NA), G278, 293–297 (KPTSS), and R319 each bind FMN.

The protein belongs to the chorismate synthase family. As to quaternary structure, homotetramer. It depends on FMNH2 as a cofactor.

The enzyme catalyses 5-O-(1-carboxyvinyl)-3-phosphoshikimate = chorismate + phosphate. It functions in the pathway metabolic intermediate biosynthesis; chorismate biosynthesis; chorismate from D-erythrose 4-phosphate and phosphoenolpyruvate: step 7/7. Functionally, catalyzes the anti-1,4-elimination of the C-3 phosphate and the C-6 proR hydrogen from 5-enolpyruvylshikimate-3-phosphate (EPSP) to yield chorismate, which is the branch point compound that serves as the starting substrate for the three terminal pathways of aromatic amino acid biosynthesis. This reaction introduces a second double bond into the aromatic ring system. In Cellvibrio japonicus (strain Ueda107) (Pseudomonas fluorescens subsp. cellulosa), this protein is Chorismate synthase.